Reading from the N-terminus, the 357-residue chain is UPF0283 membrane protein BCAN_A1047 (357 aa).

The interval 1-36 (MSDKTPRKPTAFRLEQPARVSAASEQEEPRRPRAVK) is disordered. Residues 27–36 (EEPRRPRAVK) show a composition bias toward basic and acidic residues. Transmembrane regions (helical) follow at residues 78-98 (ILFGALGILVSFAIGIWTEDL) and 109-129 (LGWTALGVAMVALAAFAAIIL).

Belongs to the UPF0283 family.

The protein localises to the cell inner membrane. The polypeptide is UPF0283 membrane protein BCAN_A1047 (Brucella canis (strain ATCC 23365 / NCTC 10854 / RM-666)).